Consider the following 88-residue polypeptide: Small ribosomal subunit protein uS15 (88 aa).

It belongs to the universal ribosomal protein uS15 family. In terms of assembly, part of the 30S ribosomal subunit. Forms a bridge to the 50S subunit in the 70S ribosome, contacting the 23S rRNA.

In terms of biological role, one of the primary rRNA binding proteins, it binds directly to 16S rRNA where it helps nucleate assembly of the platform of the 30S subunit by binding and bridging several RNA helices of the 16S rRNA. Its function is as follows. Forms an intersubunit bridge (bridge B4) with the 23S rRNA of the 50S subunit in the ribosome. This is Small ribosomal subunit protein uS15 from Acidobacterium capsulatum (strain ATCC 51196 / DSM 11244 / BCRC 80197 / JCM 7670 / NBRC 15755 / NCIMB 13165 / 161).